The chain runs to 127 residues: Large ribosomal subunit protein bL20 (127 aa).

Belongs to the bacterial ribosomal protein bL20 family.

Binds directly to 23S ribosomal RNA and is necessary for the in vitro assembly process of the 50S ribosomal subunit. It is not involved in the protein synthesizing functions of that subunit. This is Large ribosomal subunit protein bL20 from Akkermansia muciniphila (strain ATCC BAA-835 / DSM 22959 / JCM 33894 / BCRC 81048 / CCUG 64013 / CIP 107961 / Muc).